We begin with the raw amino-acid sequence, 421 residues long: NAD-specific glutamate dehydrogenase (421 aa).

Residues Lys71 and Lys95 each coordinate substrate. The Proton donor role is filled by Lys107. NAD(+) is bound by residues Thr191 and Asn222. Substrate is bound at residue Ser355.

Belongs to the Glu/Leu/Phe/Val dehydrogenases family. As to quaternary structure, homohexamer.

The catalysed reaction is L-glutamate + NAD(+) + H2O = 2-oxoglutarate + NH4(+) + NADH + H(+). The protein is NAD-specific glutamate dehydrogenase (gluD) of Clostridioides difficile (Peptoclostridium difficile).